A 263-amino-acid polypeptide reads, in one-letter code: Phosphate import ATP-binding protein PstB (263 aa).

Residues 17–258 (IDVRDLNFYY…PRRKETEDYI (242 aa)) form the ABC transporter domain. 49–56 (GPSGCGKS) serves as a coordination point for ATP.

This sequence belongs to the ABC transporter superfamily. Phosphate importer (TC 3.A.1.7) family. As to quaternary structure, the complex is composed of two ATP-binding proteins (PstB), two transmembrane proteins (PstC and PstA) and a solute-binding protein (PstS).

Its subcellular location is the cell inner membrane. The enzyme catalyses phosphate(out) + ATP + H2O = ADP + 2 phosphate(in) + H(+). In terms of biological role, part of the ABC transporter complex PstSACB involved in phosphate import. Responsible for energy coupling to the transport system. The chain is Phosphate import ATP-binding protein PstB from Ralstonia nicotianae (strain ATCC BAA-1114 / GMI1000) (Ralstonia solanacearum).